Reading from the N-terminus, the 237-residue chain is Pyridoxine 5'-phosphate synthase (237 aa).

The 3-amino-2-oxopropyl phosphate site is built by Asn-7 and Arg-18. His-43 functions as the Proton acceptor in the catalytic mechanism. 1-deoxy-D-xylulose 5-phosphate is bound by residues Arg-45 and His-50. Residue Glu-70 is the Proton acceptor of the active site. Thr-100 is a 1-deoxy-D-xylulose 5-phosphate binding site. His-190 functions as the Proton donor in the catalytic mechanism. 3-amino-2-oxopropyl phosphate contacts are provided by residues Asp-191 and 213-214; that span reads GH.

It belongs to the PNP synthase family. As to quaternary structure, homooctamer; tetramer of dimers.

Its subcellular location is the cytoplasm. It carries out the reaction 3-amino-2-oxopropyl phosphate + 1-deoxy-D-xylulose 5-phosphate = pyridoxine 5'-phosphate + phosphate + 2 H2O + H(+). The protein operates within cofactor biosynthesis; pyridoxine 5'-phosphate biosynthesis; pyridoxine 5'-phosphate from D-erythrose 4-phosphate: step 5/5. In terms of biological role, catalyzes the complicated ring closure reaction between the two acyclic compounds 1-deoxy-D-xylulose-5-phosphate (DXP) and 3-amino-2-oxopropyl phosphate (1-amino-acetone-3-phosphate or AAP) to form pyridoxine 5'-phosphate (PNP) and inorganic phosphate. This is Pyridoxine 5'-phosphate synthase from Bacteroides fragilis (strain ATCC 25285 / DSM 2151 / CCUG 4856 / JCM 11019 / LMG 10263 / NCTC 9343 / Onslow / VPI 2553 / EN-2).